The chain runs to 417 residues: UDP-N-acetylglucosamine 1-carboxyvinyltransferase (417 aa).

Residue 22-23 (KN) participates in phosphoenolpyruvate binding. UDP-N-acetyl-alpha-D-glucosamine is bound at residue Arg-93. Cys-117 acts as the Proton donor in catalysis. Cys-117 is modified (2-(S-cysteinyl)pyruvic acid O-phosphothioketal). Residues 122–126 (RPVDQ), Asp-304, and Ile-326 contribute to the UDP-N-acetyl-alpha-D-glucosamine site.

It belongs to the EPSP synthase family. MurA subfamily.

The protein resides in the cytoplasm. The enzyme catalyses phosphoenolpyruvate + UDP-N-acetyl-alpha-D-glucosamine = UDP-N-acetyl-3-O-(1-carboxyvinyl)-alpha-D-glucosamine + phosphate. The protein operates within cell wall biogenesis; peptidoglycan biosynthesis. Cell wall formation. Adds enolpyruvyl to UDP-N-acetylglucosamine. The protein is UDP-N-acetylglucosamine 1-carboxyvinyltransferase of Neisseria meningitidis serogroup A / serotype 4A (strain DSM 15465 / Z2491).